We begin with the raw amino-acid sequence, 366 residues long: Quinolinate synthase (366 aa).

Residues His-44 and Ser-61 each coordinate iminosuccinate. Cys-108 contacts [4Fe-4S] cluster. Iminosuccinate is bound by residues 139–141 (YIN) and Ser-160. Cys-228 contacts [4Fe-4S] cluster. Residues 254-256 (HPE) and Thr-271 each bind iminosuccinate. Cys-318 contacts [4Fe-4S] cluster.

Belongs to the quinolinate synthase family. Type 3 subfamily. Requires [4Fe-4S] cluster as cofactor.

The protein localises to the cytoplasm. It catalyses the reaction iminosuccinate + dihydroxyacetone phosphate = quinolinate + phosphate + 2 H2O + H(+). It functions in the pathway cofactor biosynthesis; NAD(+) biosynthesis; quinolinate from iminoaspartate: step 1/1. Functionally, catalyzes the condensation of iminoaspartate with dihydroxyacetone phosphate to form quinolinate. The chain is Quinolinate synthase from Listeria innocua serovar 6a (strain ATCC BAA-680 / CLIP 11262).